The chain runs to 965 residues: Calsyntenin-2 (965 aa).

An N-terminal signal peptide occupies residues 1–20 (MLPGRLCLVPLLLALGVGSG). The Extracellular segment spans residues 21–835 (GGSGDGGDSR…SIQRSSVVPS (815 aa)). Cadherin domains lie at 46–162 (IETS…APTF) and 163–282 (KEPA…MPLF). N-linked (GlcNAc...) asparagine glycans are attached at residues Asn58 and Asn100. 4 N-linked (GlcNAc...) asparagine glycosylation sites follow: Asn344, Asn376, Asn720, and Asn733. The helical transmembrane segment at 836 to 856 (IATVVIIISVCMLVFVVAMGV) threads the bilayer. At 857–965 (YRVRIAHQHF…NTAGVINIWK (109 aa)) the chain is on the cytoplasmic side. Positions 891-965 (PMEKHEGPGH…NTAGVINIWK (75 aa)) are disordered. Basic and acidic residues predominate over residues 892–902 (MEKHEGPGHGE). Acidic residues predominate over residues 903–915 (DETEGEEEEEAEE). The segment covering 942-959 (QSGTSSQRPERSTWNTAG) has biased composition (polar residues).

It belongs to the calsyntenin family. Proteolytically processed under normal cellular conditions. A primary zeta-cleavage generates a large extracellular (soluble) N-terminal domain (sAlc) and a short C-terminal transmembrane fragment (CTF1). A secondary cleavage catalyzed by gamma-secretase within the transmembrane domain releases the beta-Alc-gamma chain in the extracellular milieu and produces an intracellular fragment (AlcICD). This processing is strongly suppressed in the tripartite complex formed with APBA2 and APP, which seems to prevent the association with PSEN1.

It is found in the postsynaptic cell membrane. Its subcellular location is the endoplasmic reticulum membrane. It localises to the golgi apparatus membrane. The protein localises to the cell projection. The protein resides in the dendrite. Functionally, postsynaptic adhesion molecule that binds to presynaptic neurexins to mediate synapse formation, and which is involved in learning and memory. Promotes synapse development by acting as a cell adhesion molecule at the postsynaptic membrane, which associates with neurexin-alpha at the presynaptic membrane. The protein is Calsyntenin-2 of Rattus norvegicus (Rat).